The primary structure comprises 477 residues: Multidrug resistance protein PmpM (477 aa).

12 helical membrane passes run L21–V41, A56–L76, L104–L124, L133–L153, M171–G191, G202–V222, L253–I273, I286–T306, G326–L346, V360–L380, M398–L418, and L431–A451.

This sequence belongs to the multi antimicrobial extrusion (MATE) (TC 2.A.66.1) family.

It localises to the cell inner membrane. Multidrug efflux pump that functions as an H(+)/drug antiporter. Confers resistance to benzalkonium chloride, fluoroquinolones, ethidium bromide, acriflavine and tetraphenylphosphonium chloride. This is Multidrug resistance protein PmpM (pmpM) from Pseudomonas aeruginosa (strain ATCC 15692 / DSM 22644 / CIP 104116 / JCM 14847 / LMG 12228 / 1C / PRS 101 / PAO1).